Consider the following 598-residue polypeptide: Thiol:disulfide interchange protein DsbD (598 aa).

Positions 1–21 are cleaved as a signal peptide; it reads MRALLTFFVAGLLVLSSPAMA. Cysteines 130 and 136 form a disulfide. Positions 158–180 are disordered; the sequence is TMPTQTASPLDTSTANTSTPQPL. The span at 159-180 shows a compositional bias: polar residues; the sequence is MPTQTASPLDTSTANTSTPQPL. 8 consecutive transmembrane segments (helical) span residues 198–220, 240–262, 274–296, 324–346, 353–375, 385–407, 414–431, and 446–468; these read LLFLALGVGLAFTPCVLPMYPIL, LVYVQGMALTYTLLGLVVASAGL, LIGLSILFVTLALSMFGVYTLQL, AISGLVCSPCTTAPLSGALLYVA, TGGVALYALAMGMGIPLILVAVF, GWMDHVKTLFGFVLLAAPIFLLE, WSTALWSALGIAAFGWLY, and AVGIIAVLGLFASAQPALNYWFA. A disulfide bridge links cysteine 212 with cysteine 333. The 143-residue stretch at 456–598 folds into the Thioredoxin domain; that stretch reads FASAQPALNY…FLEHIQRISN (143 aa). An intrachain disulfide couples cysteine 513 to cysteine 516.

Belongs to the thioredoxin family. DsbD subfamily.

Its subcellular location is the cell inner membrane. The enzyme catalyses [protein]-dithiol + NAD(+) = [protein]-disulfide + NADH + H(+). The catalysed reaction is [protein]-dithiol + NADP(+) = [protein]-disulfide + NADPH + H(+). In terms of biological role, required to facilitate the formation of correct disulfide bonds in some periplasmic proteins and for the assembly of the periplasmic c-type cytochromes. Acts by transferring electrons from cytoplasmic thioredoxin to the periplasm. This transfer involves a cascade of disulfide bond formation and reduction steps. This is Thiol:disulfide interchange protein DsbD from Vibrio vulnificus (strain YJ016).